The chain runs to 224 residues: Golgi to ER traffic protein 1 (224 aa).

At 1 to 33 (MDEAIIVDAEFVAPVGTTAGEFVPIDRAPAAGL) the chain is on the lumenal side. A helical membrane pass occupies residues 34–53 (LLLVAFVVLYAKVISKLGKP). Over 54-137 (AIQEFLWEII…RFFTIISSAI (84 aa)) the chain is Cytoplasmic. The stretch at 102 to 124 (AKLDREYGKLKVEIEDINNLLTA) forms a coiled coil. A helical transmembrane segment spans residues 138 to 158 (FLSTTGMKMFLRIKHRKAAIF). Residues 159 to 182 (WLPKNAFPYPIEYILSFSSAPLGS) are Lumenal-facing. A helical membrane pass occupies residues 183-199 (VSVSAWLMICDAAMDLI). Residues 200 to 224 (VTIFVALVVGVIGMLRSNKVKPKTA) are Cytoplasmic-facing.

This sequence belongs to the WRB/GET1 family. Component of the Golgi to ER traffic (GET) complex, which is composed of GET1, GET2 and GET3. Within the complex, GET1 and GET2 form a heterotetramer which is stabilized by phosphatidylinositol binding and which binds to the GET3 homodimer.

The protein resides in the endoplasmic reticulum membrane. It localises to the golgi apparatus membrane. In terms of biological role, required for the post-translational delivery of tail-anchored (TA) proteins to the endoplasmic reticulum. Together with GET2, acts as a membrane receptor for soluble GET3, which recognizes and selectively binds the transmembrane domain of TA proteins in the cytosol. The GET complex cooperates with the HDEL receptor ERD2 to mediate the ATP-dependent retrieval of resident ER proteins that contain a C-terminal H-D-E-L retention signal from the Golgi to the ER. This chain is Golgi to ER traffic protein 1, found in Yarrowia lipolytica (strain CLIB 122 / E 150) (Yeast).